Consider the following 142-residue polypeptide: Interleukin-3 (142 aa).

The signal sequence occupies residues 1–18 (MSHLPILLLLLLVSPGLQ). A glycan (N-linked (GlcNAc...) asparagine) is linked at Asn-33. The cysteines at positions 34 and 102 are disulfide-linked.

It belongs to the IL-3 family. In terms of assembly, monomer. As to expression, activated T-cells, mast cells, natural killer cells.

Its subcellular location is the secreted. Its function is as follows. Granulocyte/macrophage colony-stimulating factors are cytokines that act in hematopoiesis by controlling the production, differentiation, and function of 2 related white cell populations of the blood, the granulocytes and the monocytes-macrophages. This CSF induces granulocytes, macrophages, mast cells, stem cells, erythroid cells, eosinophils and megakaryocytes. This chain is Interleukin-3 (IL3), found in Callithrix jacchus (White-tufted-ear marmoset).